The sequence spans 476 residues: Argininosuccinate lyase (476 aa).

A compositionally biased stretch (low complexity) spans 1–17 (MTDTGSSDTNTDTTGTS). Residues 1–22 (MTDTGSSDTNTDTTGTSKANTM) form a disordered region.

This sequence belongs to the lyase 1 family. Argininosuccinate lyase subfamily.

It localises to the cytoplasm. The enzyme catalyses 2-(N(omega)-L-arginino)succinate = fumarate + L-arginine. Its pathway is amino-acid biosynthesis; L-arginine biosynthesis; L-arginine from L-ornithine and carbamoyl phosphate: step 3/3. The polypeptide is Argininosuccinate lyase (Jannaschia sp. (strain CCS1)).